Consider the following 767-residue polypeptide: DNA topoisomerase 1 (767 aa).

Residues 1–23 show a composition bias toward basic and acidic residues; it reads MSGDHLHNDSQIEADFRLNDSHK. Residues 1–201 are disordered; that stretch reads MSGDHLHNDS…NKKKKPKKEE (201 aa). At Ser-2 the chain carries N-acetylserine. Phosphoserine occurs at positions 2 and 10. Basic residues predominate over residues 24-39; that stretch reads HKDKHKDREHRHKEHK. Positions 40–110 are enriched in basic and acidic residues; sequence KDKEKDREKS…DAKIKKEKEN (71 aa). A Phosphoserine modification is found at Ser-59. Residue Lys-103 forms a Glycyl lysine isopeptide (Lys-Gly) (interchain with G-Cter in SUMO2) linkage. Lys-105 is covalently cross-linked (Glycyl lysine isopeptide (Lys-Gly) (interchain with G-Cter in SUMO); alternate). Residue Lys-105 forms a Glycyl lysine isopeptide (Lys-Gly) (interchain with G-Cter in SUMO2); alternate linkage. Ser-114 carries the phosphoserine modification. A Glycyl lysine isopeptide (Lys-Gly) (interchain with G-Cter in SUMO); alternate cross-link involves residue Lys-119. Residue Lys-119 forms a Glycyl lysine isopeptide (Lys-Gly) (interchain with G-Cter in SUMO2); alternate linkage. Lys-119 participates in a covalent cross-link: Glycyl lysine isopeptide (Lys-Gly) (interchain with G-Cter in SUMO1); alternate. A compositionally biased stretch (basic and acidic residues) spans 131–168; it reads PKEDIKPLKRPRDEDDADYKPKKIKTEDIKKEKKRKLE. Glycyl lysine isopeptide (Lys-Gly) (interchain with G-Cter in SUMO2) cross-links involve residues Lys-136 and Lys-150. Lys-155 is covalently cross-linked (Glycyl lysine isopeptide (Lys-Gly) (interchain with G-Cter in SUMO); alternate). Lys-155 participates in a covalent cross-link: Glycyl lysine isopeptide (Lys-Gly) (interchain with G-Cter in SUMO2); alternate. Residues Lys-160 and Lys-166 each participate in a glycyl lysine isopeptide (Lys-Gly) (interchain with G-Cter in SUMO2) cross-link. Residue Lys-174 forms a Glycyl lysine isopeptide (Lys-Gly) (interchain with G-Cter in SUMO2); alternate linkage. Lys-174 is modified (N6-acetyllysine; alternate). Residues 181 to 201 are compositionally biased toward basic and acidic residues; that stretch reads KDKDKKVPEPDNKKKKPKKEE. Residue Lys-206 forms a Glycyl lysine isopeptide (Lys-Gly) (interchain with G-Cter in SUMO2) linkage. The residue at position 282 (Lys-282) is an N6-acetyllysine. Lys-338 is covalently cross-linked (Glycyl lysine isopeptide (Lys-Gly) (interchain with G-Cter in SUMO2)). Interaction with DNA stretches follow at residues 427–428 and 490–495; these read KY and RAGNEK. A Topo IB-type catalytic domain is found at 434 to 767; sequence SSRIKGEKDW…IDMADEDYEF (334 aa). The residue at position 508 (Ser-508) is a Phosphoserine; by CK2. Lys-551 is covalently cross-linked (Glycyl lysine isopeptide (Lys-Gly) (interchain with G-Cter in SUMO2)). Residues 587–589 are interaction with DNA; sequence TAK. Residues Lys-644, Lys-702, and Lys-714 each participate in a glycyl lysine isopeptide (Lys-Gly) (interchain with G-Cter in SUMO2) cross-link. Tyr-725 serves as the catalytic O-(3'-phospho-DNA)-tyrosine intermediate.

This sequence belongs to the type IB topoisomerase family. As to quaternary structure, monomer. Interacts with ERCC6. Interacts with TPRN; TPRN interacts with a number of DNA damage response proteins, is recruited to sites of DNA damage and may play a role in DNA damage repair. Post-translationally, sumoylated. Lys-119 is the main site of sumoylation. Sumoylation plays a role in partitioning TOP1 between nucleoli and nucleoplasm. Levels are dramatically increased on camptothecin (CPT) treatment. In terms of processing, phosphorylation at Ser-508 by CK2 increases binding to supercoiled DNA and sensitivity to camptothecin.

The protein localises to the nucleus. It localises to the nucleolus. Its subcellular location is the nucleoplasm. The enzyme catalyses ATP-independent breakage of single-stranded DNA, followed by passage and rejoining.. With respect to regulation, specifically inhibited by camptothecin (CPT), a plant alkaloid with antitumor activity. Releases the supercoiling and torsional tension of DNA introduced during the DNA replication and transcription by transiently cleaving and rejoining one strand of the DNA duplex. Introduces a single-strand break via transesterification at a target site in duplex DNA. The scissile phosphodiester is attacked by the catalytic tyrosine of the enzyme, resulting in the formation of a DNA-(3'-phosphotyrosyl)-enzyme intermediate and the expulsion of a 5'-OH DNA strand. The free DNA strand then rotates around the intact phosphodiester bond on the opposing strand, thus removing DNA supercoils. Finally, in the religation step, the DNA 5'-OH attacks the covalent intermediate to expel the active-site tyrosine and restore the DNA phosphodiester backbone. Regulates the alternative splicing of tissue factor (F3) pre-mRNA in endothelial cells. Involved in the circadian transcription of the core circadian clock component BMAL1 by altering the chromatin structure around the ROR response elements (ROREs) on the BMAL1 promoter. The sequence is that of DNA topoisomerase 1 (TOP1) from Chlorocebus aethiops (Green monkey).